A 220-amino-acid polypeptide reads, in one-letter code: Adenylate kinase (220 aa).

10–15 (GSGKST) contributes to the ATP binding site. An NMP region spans residues 30–59 (SSGDLIRKEIAEGTPLGREMQAYLARGDLI). AMP contacts are provided by residues Ser31, Arg36, 57-59 (DLI), 83-86 (GYPR), and Gln90. The tract at residues 124 to 161 (GRRICPKCGAVYHVEFNPPKIPGRCDVCGAELVQREDD) is LID. Arg125 is an ATP binding site. Zn(2+) is bound by residues Cys128 and Cys131. Residue 134–135 (VY) participates in ATP binding. The Zn(2+) site is built by Cys148 and Cys151. Arg158 and Arg169 together coordinate AMP. Residue Gly197 coordinates ATP.

This sequence belongs to the adenylate kinase family. As to quaternary structure, monomer.

Its subcellular location is the cytoplasm. The catalysed reaction is AMP + ATP = 2 ADP. The protein operates within purine metabolism; AMP biosynthesis via salvage pathway; AMP from ADP: step 1/1. In terms of biological role, catalyzes the reversible transfer of the terminal phosphate group between ATP and AMP. Plays an important role in cellular energy homeostasis and in adenine nucleotide metabolism. The sequence is that of Adenylate kinase from Pyrococcus furiosus (strain ATCC 43587 / DSM 3638 / JCM 8422 / Vc1).